The sequence spans 728 residues: Methionine--tRNA ligase (728 aa).

Positions 13–23 (PYANGSIHLGH) match the 'HIGH' region motif. Zn(2+) contacts are provided by Cys144, Cys147, Cys157, and Cys160. The short motif at 348-352 (KMSKS) is the 'KMSKS' region element. An ATP-binding site is contributed by Lys351. A disordered region spans residues 585-620 (LAPAKSQQVAQAVETMEKNSSTTPAPAKEGEAGQAS). The tRNA-binding domain occupies 628–728 (DFGKIDLRVA…EGARPGMKVK (101 aa)).

This sequence belongs to the class-I aminoacyl-tRNA synthetase family. MetG type 1 subfamily. Homodimer. Requires Zn(2+) as cofactor.

It localises to the cytoplasm. The enzyme catalyses tRNA(Met) + L-methionine + ATP = L-methionyl-tRNA(Met) + AMP + diphosphate. In terms of biological role, is required not only for elongation of protein synthesis but also for the initiation of all mRNA translation through initiator tRNA(fMet) aminoacylation. This chain is Methionine--tRNA ligase, found in Nitrosospira multiformis (strain ATCC 25196 / NCIMB 11849 / C 71).